A 114-amino-acid polypeptide reads, in one-letter code: Hydrogenase maturation factor HypA (114 aa).

A Ni(2+)-binding site is contributed by His-2. Cys-73, Cys-76, Cys-90, and Cys-93 together coordinate Zn(2+).

Belongs to the HypA/HybF family.

Its function is as follows. Involved in the maturation of [NiFe] hydrogenases. Required for nickel insertion into the metal center of the hydrogenase. This is Hydrogenase maturation factor HypA from Chloroflexus aggregans (strain MD-66 / DSM 9485).